An 88-amino-acid chain; its full sequence is MSLFPIVGRFVGDFVPHLVAVDTSDTIDQIAEKVAVHTVGRRLPPDPTATGYEVLLDGETLDGGATLEAIMTKREMLPLQWFDVRFKK.

Belongs to the TmoB/XamoB family. As to quaternary structure, the alkene monooxygenase multicomponent enzyme system is composed of an electron transfer component and a monooxygenase component interacting with the effector protein XamoD. The electron transfer component is composed of a ferredoxin reductase (XamoF) and a ferredoxin (XamoC), and the monooxygenase component is formed by a heterohexamer (dimer of heterotrimers) of two alpha subunits (XamoA), two beta subunits (XamoE) and two gamma subunits (XamoB).

Its subcellular location is the cytoplasm. The catalysed reaction is propene + NADH + O2 + H(+) = 1,2-epoxypropane + NAD(+) + H2O. With respect to regulation, inhibited by propyne. Component of the alkene monooxygenase multicomponent enzyme system which catalyzes the O2- and NADH-dependent epoxidation of short chain (C2 to C6) alkenes to their corresponding epoxides. Also able to catalyze the oxidation of a number of chlorinated alkenes, including trichloroethylene, cis- and trans-1,2-dichloroethylene, vinyl chloride, 1-chloropropylene, 1,3-dichloropropylene and 2,3-dichloropropylene. The protein is Alkene monooxygenase system, oxygenase component subunit gamma of Xanthobacter autotrophicus (strain ATCC BAA-1158 / Py2).